Consider the following 61-residue polypeptide: Large ribosomal subunit protein bL32 (61 aa).

A disordered region spans residues 1-20; sequence MAVQKSKPSRAKRGKRRSHD. The span at 7–19 shows a compositional bias: basic residues; that stretch reads KPSRAKRGKRRSH.

This sequence belongs to the bacterial ribosomal protein bL32 family.

This chain is Large ribosomal subunit protein bL32, found in Buchnera aphidicola subsp. Cinara cedri (strain Cc).